Consider the following 362-residue polypeptide: 3-dehydroquinate synthase (362 aa).

NAD(+) is bound by residues 71–76 (DGEQYK), 105–109 (GVIGD), 129–130 (TT), Lys142, Lys151, and 169–172 (CLKT). Zn(2+) is bound by residues Glu184, His247, and His264.

It belongs to the sugar phosphate cyclases superfamily. Dehydroquinate synthase family. It depends on Co(2+) as a cofactor. Zn(2+) serves as cofactor. Requires NAD(+) as cofactor.

The protein localises to the cytoplasm. It carries out the reaction 7-phospho-2-dehydro-3-deoxy-D-arabino-heptonate = 3-dehydroquinate + phosphate. It functions in the pathway metabolic intermediate biosynthesis; chorismate biosynthesis; chorismate from D-erythrose 4-phosphate and phosphoenolpyruvate: step 2/7. In terms of biological role, catalyzes the conversion of 3-deoxy-D-arabino-heptulosonate 7-phosphate (DAHP) to dehydroquinate (DHQ). The sequence is that of 3-dehydroquinate synthase from Salmonella enteritidis PT4 (strain P125109).